The following is a 176-amino-acid chain: Avian agnoprotein 1a (176 aa).

Disordered regions lie at residues 1–85 and 116–176; these read MSTP…GKLE and VYAA…RPAR. Residues 75-85 show a composition bias toward basic and acidic residues; that stretch reads YDRQNRFGKLE. The stretch at 76-119 forms a coiled coil; that stretch reads DRQNRFGKLESEIRETKSQLETLRQELKHLQADVDDLKETVYAA. Residues 137-161 show a composition bias toward low complexity; sequence TPTATTPEASPAAPTTESTETTGPS.

Interacts with VP1.

Its subcellular location is the virion. The protein localises to the host nucleus. This is Avian agnoprotein 1a from Budgerigar fledgling disease virus (BFPyV).